Reading from the N-terminus, the 327-residue chain is Putative HTH-type transcriptional regulatory protein Mbar_A2318 (327 aa).

The 59-residue stretch at 132-190 folds into the HTH cro/C1-type domain; sequence LKKARMGQSMSLGTLASMVGVSRRTISKYEEEGMDASIDVVLQLEDIFGVELAKPINIL. Positions 143–162 form a DNA-binding region, H-T-H motif; the sequence is LGTLASMVGVSRRTISKYEE.

The protein is Putative HTH-type transcriptional regulatory protein Mbar_A2318 of Methanosarcina barkeri (strain Fusaro / DSM 804).